Consider the following 161-residue polypeptide: Transcription elongation factor GreA (161 aa).

Residues 45–72 (NAEYHSAKEKLKLIDIQIAELNAVISKA) are a coiled coil.

It belongs to the GreA/GreB family.

Functionally, necessary for efficient RNA polymerase transcription elongation past template-encoded arresting sites. The arresting sites in DNA have the property of trapping a certain fraction of elongating RNA polymerases that pass through, resulting in locked ternary complexes. Cleavage of the nascent transcript by cleavage factors such as GreA or GreB allows the resumption of elongation from the new 3'terminus. GreA releases sequences of 2 to 3 nucleotides. The sequence is that of Transcription elongation factor GreA from Aliarcobacter butzleri (strain RM4018) (Arcobacter butzleri).